Reading from the N-terminus, the 837-residue chain is Cap-specific mRNA (nucleoside-2'-O-)-methyltransferase 1 (837 aa).

Residues 1 to 66 (MKRRTDPECT…EGKQPCSDDF (66 aa)) are disordered. The Bipartite nuclear localization signal motif lies at 2-18 (KRRTDPECTAPLKKQKR). A phosphoserine mark is found at S27, S30, and S52. Residues 56-66 (TEGKQPCSDDF) are compositionally biased toward basic and acidic residues. The 47-residue stretch at 86–132 (YNSVSQRLMAKMGFREGEGLGKYSQGRKDIVETSNQKGRRGLGLTLQ) folds into the G-patch domain. S90 is modified (phosphoserine). At K107 the chain carries N6-acetyllysine. Substrate is bound by residues 202-206 (KSVFD) and R217. Residues 230-449 (FFLNRAAMKM…ERYVVCKGLK (220 aa)) form the RrmJ-type SAM-dependent 2'-O-MTase domain. S-adenosyl-L-methionine is bound at residue N233. The active site involves K238. S-adenosyl-L-methionine contacts are provided by residues 276 to 282 (CAGPGGF) and 334 to 335 (DI). The active site involves D363. 373–375 (NLQ) contributes to the substrate binding site. K403 functions as the Proton acceptor in the catalytic mechanism. N438 is a substrate binding site. Residues 726 to 834 (SGGTPKLSYT…VLSFIQSHNP (109 aa)) form an interaction with POLR2A region. Residues 751 to 785 (RTVNEPWTMGFSKSNNRKFFYNKKTQKSVYALPTE) enclose the WW domain.

As to quaternary structure, interacts with POLR2A (via C-terminus).

It is found in the nucleus. It carries out the reaction a 5'-end (N(7)-methyl 5'-triphosphoguanosine)-ribonucleoside in mRNA + S-adenosyl-L-methionine = a 5'-end (N(7)-methyl 5'-triphosphoguanosine)-(2'-O-methyl-ribonucleoside) in mRNA + S-adenosyl-L-homocysteine + H(+). Functionally, S-adenosyl-L-methionine-dependent methyltransferase that mediates mRNA cap1 2'-O-ribose methylation to the 5'-cap structure of mRNAs. Methylates the ribose of the first nucleotide of a m(7)GpppG-capped mRNA and small nuclear RNA (snRNA) to produce m(7)GpppRm (cap1). Displays a preference for cap0 transcripts. Cap1 modification is linked to higher levels of translation. May be involved in the interferon response pathway. The polypeptide is Cap-specific mRNA (nucleoside-2'-O-)-methyltransferase 1 (Cmtr1) (Mus musculus (Mouse)).